Reading from the N-terminus, the 149-residue chain is Putative pre-16S rRNA nuclease (149 aa).

Belongs to the YqgF nuclease family.

Its subcellular location is the cytoplasm. Its function is as follows. Could be a nuclease involved in processing of the 5'-end of pre-16S rRNA. In Burkholderia orbicola (strain MC0-3), this protein is Putative pre-16S rRNA nuclease.